We begin with the raw amino-acid sequence, 66 residues long: Large ribosomal subunit protein bL35 (66 aa).

The span at 1–16 shows a compositional bias: basic residues; it reads MPKQKTHRASAKRFKR. The disordered stretch occupies residues 1-22; that stretch reads MPKQKTHRASAKRFKRTGSGGL.

It belongs to the bacterial ribosomal protein bL35 family.

The sequence is that of Large ribosomal subunit protein bL35 from Streptococcus suis (strain 05ZYH33).